Consider the following 107-residue polypeptide: Large ribosomal subunit protein P2 (107 aa).

The segment at 86–107 (PAAAAAEAEEEDDDDMGFGLFD) is disordered. Over residues 92-101 (EAEEEDDDDM) the composition is skewed to acidic residues.

Belongs to the eukaryotic ribosomal protein P1/P2 family. P1 and P2 exist as dimers at the large ribosomal subunit. Phosphorylated.

Its function is as follows. Plays an important role in the elongation step of protein synthesis. The protein is Large ribosomal subunit protein P2 of Trypanosoma brucei brucei.